The sequence spans 320 residues: MMEIANVSSPEVFVLLGFSTRPSLETVLFIVVLSFYMVSILGNGIIILVSHTDVHLHTPMYFFLANLPFLDMSFTTSIVPQLLANLWGPQKTISYGGCVVQFYISHWLGATECVLLATMSYDRYAAICRPLHYTVIMHPQLCLGLALASWLGGLTTSMVGSTLTMLLPLCGNNCIDHFFCEMPLIMQLACVDTSLNEMEMYLASFVFVVLPLGLILVSYGHIARAVLKIRSAEGRRKAFNTCSSHVAVVSLFYGSIIFMYLQPAKSTSHEQGKFIALFYTVVTPALNPLIYTLRNTEVKSALRHMVLENCCGSAGKLAQI.

At 1–26 (MMEIANVSSPEVFVLLGFSTRPSLET) the chain is on the extracellular side. N6 carries N-linked (GlcNAc...) asparagine glycosylation. The helical transmembrane segment at 27–50 (VLFIVVLSFYMVSILGNGIIILVS) threads the bilayer. The Cytoplasmic portion of the chain corresponds to 51-58 (HTDVHLHT). Residues 59 to 80 (PMYFFLANLPFLDMSFTTSIVP) traverse the membrane as a helical segment. Topologically, residues 81–101 (QLLANLWGPQKTISYGGCVVQ) are extracellular. Residues C98 and C190 are joined by a disulfide bond. A helical membrane pass occupies residues 102–121 (FYISHWLGATECVLLATMSY). The Cytoplasmic portion of the chain corresponds to 122–140 (DRYAAICRPLHYTVIMHPQ). Residues 141–159 (LCLGLALASWLGGLTTSMV) form a helical membrane-spanning segment. Residues 160–196 (GSTLTMLLPLCGNNCIDHFFCEMPLIMQLACVDTSLN) lie on the Extracellular side of the membrane. A helical transmembrane segment spans residues 197–220 (EMEMYLASFVFVVLPLGLILVSYG). At 221–237 (HIARAVLKIRSAEGRRK) the chain is on the cytoplasmic side. A helical transmembrane segment spans residues 238–260 (AFNTCSSHVAVVSLFYGSIIFMY). Residues 261 to 273 (LQPAKSTSHEQGK) are Extracellular-facing. A helical transmembrane segment spans residues 274–293 (FIALFYTVVTPALNPLIYTL). Topologically, residues 294 to 320 (RNTEVKSALRHMVLENCCGSAGKLAQI) are cytoplasmic.

Belongs to the G-protein coupled receptor 1 family.

The protein resides in the cell membrane. Functionally, odorant receptor. The chain is Olfactory receptor 2C3 (OR2C3) from Homo sapiens (Human).